Consider the following 159-residue polypeptide: MRRAVCPGSFDPITNGHLDIIARASKLYDVVHVAVMINQSKKGLFEVDERIELIRQVTAEFGNVEVESFHGLLVDFCKQRDIPAIVKGLRAVSDFDYELQMAQMNIGLSGVETLFVPTNPTYSFLSSSLVKEVAAWGGDVSHLVPPAVLEALNGRLKQD.

Ser-9 serves as a coordination point for substrate. ATP contacts are provided by residues 9 to 10 (SF) and His-17. Lys-41, Leu-73, and Lys-87 together coordinate substrate. ATP-binding positions include 88–90 (GLR), Glu-98, and 122–128 (YSFLSSS).

Belongs to the bacterial CoaD family. Homohexamer. Requires Mg(2+) as cofactor.

It is found in the cytoplasm. The enzyme catalyses (R)-4'-phosphopantetheine + ATP + H(+) = 3'-dephospho-CoA + diphosphate. Its pathway is cofactor biosynthesis; coenzyme A biosynthesis; CoA from (R)-pantothenate: step 4/5. Functionally, reversibly transfers an adenylyl group from ATP to 4'-phosphopantetheine, yielding dephospho-CoA (dPCoA) and pyrophosphate. The polypeptide is Phosphopantetheine adenylyltransferase (Streptomyces avermitilis (strain ATCC 31267 / DSM 46492 / JCM 5070 / NBRC 14893 / NCIMB 12804 / NRRL 8165 / MA-4680)).